Reading from the N-terminus, the 114-residue chain is Putative membrane protein insertion efficiency factor (114 aa).

This sequence belongs to the UPF0161 family.

It localises to the cell inner membrane. Functionally, could be involved in insertion of integral membrane proteins into the membrane. The sequence is that of Putative membrane protein insertion efficiency factor from Wolinella succinogenes (strain ATCC 29543 / DSM 1740 / CCUG 13145 / JCM 31913 / LMG 7466 / NCTC 11488 / FDC 602W) (Vibrio succinogenes).